A 703-amino-acid polypeptide reads, in one-letter code: Polyribonucleotide nucleotidyltransferase (703 aa).

Residues Asp-487 and Asp-493 each coordinate Mg(2+). The KH domain occupies 554–613 (PKMETIKIDPDKIRDVIGKGGATIRSICEDTGASIDIDDNGTVRIYAESKLAADEAIYRI). The region spanning 623 to 691 (GKLYRGKVER…ARGRIKLSMK (69 aa)) is the S1 motif domain.

Belongs to the polyribonucleotide nucleotidyltransferase family. Component of the RNA degradosome, which is a multiprotein complex involved in RNA processing and mRNA degradation. Mg(2+) serves as cofactor.

The protein resides in the cytoplasm. It carries out the reaction RNA(n+1) + phosphate = RNA(n) + a ribonucleoside 5'-diphosphate. In terms of biological role, involved in mRNA degradation. Catalyzes the phosphorolysis of single-stranded polyribonucleotides processively in the 3'- to 5'-direction. This Hahella chejuensis (strain KCTC 2396) protein is Polyribonucleotide nucleotidyltransferase.